Here is a 225-residue protein sequence, read N- to C-terminus: C-reactive protein (225 aa).

The signal sequence occupies residues 1-19 (MAKLLLYFLLLTSLSDVFG). One can recognise a Pentraxin (PTX) domain in the interval 24 to 225 (SKKTFVFPKE…EVFIKPQLWP (202 aa)). Residues cysteine 55 and cysteine 116 are joined by a disulfide bond. Ca(2+) is bound by residues asparagine 80, glutamine 158, aspartate 159, and glutamine 169.

It belongs to the pentraxin family. In terms of assembly, homopentamer. Pentraxin (or pentaxin) have a discoid arrangement of 5 non-covalently bound subunits. Interacts with FCN1; may regulate monocyte activation by FCN1. Ca(2+) is required as a cofactor. As to expression, found in plasma.

Its subcellular location is the secreted. Its function is as follows. Displays several functions associated with host defense: it promotes agglutination, bacterial capsular swelling, phagocytosis and complement fixation through its calcium-dependent binding to phosphorylcholine. Can interact with DNA and histones and may scavenge nuclear material released from damaged circulating cells. The chain is C-reactive protein (CRP) from Cavia porcellus (Guinea pig).